We begin with the raw amino-acid sequence, 170 residues long: MECPVCGSNEIVWDNKNGEVVCSNCGIIIDNIYYSGQNESESTDTIIISNTFYKDEILIKELRIKNFLKKNRIKNKKTDQYEIILRSMLVDAQYKKIYKVLYDEGILSGLKAKSKLGLLIYFRFALNDRYLHQLKEFNIKNENLRKILKRIGRKRLTLIFDKLNEESDRI.

The TFIIB-type zinc-finger motif lies at 1–30 (MECPVCGSNEIVWDNKNGEVVCSNCGIIID). Zn(2+) is bound by residues cysteine 3, cysteine 6, cysteine 22, and cysteine 25.

The protein belongs to the TFIIB family. Requires Zn(2+) as cofactor.

The chain is TFIIB-type zinc finger protein from Saccharolobus shibatae (strain ATCC 51178 / DSM 5389 / JCM 8931 / NBRC 15437 / B12) (Sulfolobus shibatae).